A 506-amino-acid polypeptide reads, in one-letter code: Procardosin-B (506 aa).

The signal sequence occupies residues 1–24; sequence MGTPIKASLLALFLFFLLSPTAFS. Positions 25–70 are excised as a propeptide; sequence VSNGGLLRVGLKKRKVDRLDQLRAHGVHMLGNARKDFGFRRTLSDS. The Peptidase A1 domain maps to 85-503; the sequence is YYGEIGIGTP…DYGKLRVGFA (419 aa). Asp103 is an active-site residue. A disulfide bond links Cys116 and Cys122. N-linked (GlcNAc...) asparagine glycosylation is found at Asn139 and Asn252. Residues Cys281 and Cys285 are joined by a disulfide bond. Asp290 is a catalytic residue. The 103-residue stretch at 315–417 folds into the Saposin B-type domain; sequence VLNQQCKTLV…NEVCDQLPTS (103 aa). 4 cysteine pairs are disulfide-bonded: Cys320–Cys411, Cys345–Cys383, Cys351–Cys380, and Cys425–Cys462. An N-linked (GlcNAc...) asparagine glycan is attached at Asn397.

Belongs to the peptidase A1 family. Heterodimer of a light chain and a heavy chain. An intermediate form is produced first, and undergoes proteolytic processing to remove the internal plant-specific insert (PSI) and the propeptide. As to expression, detected in pistils, but not in seeds, bracts, midribs, roots, leaves or stamen extracts. Detected in seeds. In stigmas and styles, detected in the transmitting tissue and in contiguous subepidermal layers at the longitudenal grooves of the stigma (at protein level).

The protein resides in the microsome membrane. Its subcellular location is the protein storage vacuole. It localises to the secreted. The protein localises to the cell wall. It is found in the extracellular space. The protein resides in the extracellular matrix. Inhibited by the specific aspartic proteinase inhibitors diazoacetyl-noleucine methyl ester and pepstatin. Aspartic protease. Cleaves alpha-lactalbumin but not beta-lactoglobulin. The polypeptide is Procardosin-B (Cynara cardunculus (Cardoon)).